The sequence spans 1238 residues: Kinesin-related protein 10 (1238 aa).

The Kinesin motor domain occupies 16 to 374 (SMIVTVRIRP…LKYAQRAKSI (359 aa)). 116–123 (GASGAGKT) is an ATP binding site. Positions 417–436 (NNNNSNNNNNNNNNNYFSNS) are enriched in low complexity. Residues 417 to 503 (NNNNSNNNNN…DGEDSNNRDN (87 aa)) are disordered. Over residues 437–464 (FGSCGNKNQPIKQPTPPTSLFHQQNQKY) the composition is skewed to polar residues. The span at 468–497 (DDDDDDDNDQEENNDEVLINEDDEEVDGED) shows a compositional bias: acidic residues. The stretch at 527 to 602 (TLKKTQSIQR…NNQWRRKLQS (76 aa)) forms a coiled coil. 3 stretches are compositionally biased toward low complexity: residues 726–795 (NDIN…NIIN), 918–934 (LLPS…SSPL), and 961–971 (NNNNNNNNIAP). 4 disordered regions span residues 726-802 (NDIN…LKPR), 891-971 (EIDD…NIAP), 1134-1156 (TPTS…TTST), and 1191-1238 (ATLT…KIIK). A compositionally biased stretch (polar residues) spans 1191–1203 (ATLTPNRNNSQIV). A compositionally biased stretch (low complexity) spans 1215-1228 (PTSSSSRLLPSSRT). The span at 1229-1238 (TVNTSRKIIK) shows a compositional bias: polar residues.

This sequence belongs to the TRAFAC class myosin-kinesin ATPase superfamily. Kinesin family.

The protein resides in the cytoplasm. The protein localises to the cytoskeleton. In terms of biological role, microtubule-associated force-producing protein that plays a role in organelle transport. Its motor activity is directed toward the microtubule's plus end. Cooperates with kif8 and dynein to organize interphase microtubules. In Dictyostelium discoideum (Social amoeba), this protein is Kinesin-related protein 10 (kif10).